The chain runs to 91 residues: Small ribosomal subunit protein bS18 (91 aa).

Belongs to the bacterial ribosomal protein bS18 family. As to quaternary structure, part of the 30S ribosomal subunit. Forms a tight heterodimer with protein bS6.

Binds as a heterodimer with protein bS6 to the central domain of the 16S rRNA, where it helps stabilize the platform of the 30S subunit. This Wolbachia sp. subsp. Brugia malayi (strain TRS) protein is Small ribosomal subunit protein bS18.